The primary structure comprises 891 residues: Valine--tRNA ligase (891 aa).

Residues 43–53 carry the 'HIGH' region motif; that stretch reads PFTSGTLHLGH. The 'KMSKS' region signature appears at 536–540; it reads KMSKS. Residue K539 participates in ATP binding.

The protein belongs to the class-I aminoacyl-tRNA synthetase family. ValS type 2 subfamily.

The protein resides in the cytoplasm. The catalysed reaction is tRNA(Val) + L-valine + ATP = L-valyl-tRNA(Val) + AMP + diphosphate. Functionally, catalyzes the attachment of valine to tRNA(Val). As ValRS can inadvertently accommodate and process structurally similar amino acids such as threonine, to avoid such errors, it has a 'posttransfer' editing activity that hydrolyzes mischarged Thr-tRNA(Val) in a tRNA-dependent manner. This Pyrococcus abyssi (strain GE5 / Orsay) protein is Valine--tRNA ligase.